A 190-amino-acid polypeptide reads, in one-letter code: Pyridoxal 5'-phosphate synthase subunit PdxT (190 aa).

46 to 48 serves as a coordination point for L-glutamine; that stretch reads GES. Cys-78 serves as the catalytic Nucleophile. L-glutamine-binding positions include Arg-105 and 133–134; that span reads IR. Active-site charge relay system residues include His-169 and Glu-171.

The protein belongs to the glutaminase PdxT/SNO family. As to quaternary structure, in the presence of PdxS, forms a dodecamer of heterodimers. Only shows activity in the heterodimer.

The catalysed reaction is aldehydo-D-ribose 5-phosphate + D-glyceraldehyde 3-phosphate + L-glutamine = pyridoxal 5'-phosphate + L-glutamate + phosphate + 3 H2O + H(+). The enzyme catalyses L-glutamine + H2O = L-glutamate + NH4(+). It participates in cofactor biosynthesis; pyridoxal 5'-phosphate biosynthesis. Functionally, catalyzes the hydrolysis of glutamine to glutamate and ammonia as part of the biosynthesis of pyridoxal 5'-phosphate. The resulting ammonia molecule is channeled to the active site of PdxS. The polypeptide is Pyridoxal 5'-phosphate synthase subunit PdxT (Niallia circulans (Bacillus circulans)).